A 437-amino-acid chain; its full sequence is GTPase Obg (437 aa).

One can recognise an Obg domain in the interval 2–160 (SMFLDTAKIS…RQLELELKIL (159 aa)). The OBG-type G domain occupies 161-338 (ADVGLVGFPS…LLEATAELLA (178 aa)). Residues 167 to 174 (GFPSVGKS), 192 to 196 (FTTIV), 214 to 217 (DLPG), 284 to 287 (NKMD), and 319 to 321 (SSL) contribute to the GTP site. Mg(2+) contacts are provided by Ser174 and Thr194. The 79-residue stretch at 359-437 (GFAKTEKDFE…IGKFEFEFVD (79 aa)) folds into the OCT domain.

Belongs to the TRAFAC class OBG-HflX-like GTPase superfamily. OBG GTPase family. Monomer. Mg(2+) is required as a cofactor.

Its subcellular location is the cytoplasm. In terms of biological role, an essential GTPase which binds GTP, GDP and possibly (p)ppGpp with moderate affinity, with high nucleotide exchange rates and a fairly low GTP hydrolysis rate. Plays a role in control of the cell cycle, stress response, ribosome biogenesis and in those bacteria that undergo differentiation, in morphogenesis control. This Streptococcus pyogenes serotype M2 (strain MGAS10270) protein is GTPase Obg.